A 527-amino-acid polypeptide reads, in one-letter code: Glutamyl-tRNA reductase 1, chloroplastic (527 aa).

The transit peptide at 1–43 (MAGATSATAAAGAFAAAKARGPAAACPWLVAAGGRRRSGVVRC) directs the protein to the chloroplast. Residues 124 to 127 (TCNR), Ser184, 189 to 191 (EGQ), and Gln195 each bind substrate. Residue Cys125 is the Nucleophile of the active site. 266–271 (GAGKMG) is a binding site for NADP(+).

This sequence belongs to the glutamyl-tRNA reductase family. As to quaternary structure, homodimer.

The protein resides in the plastid. It is found in the chloroplast. The enzyme catalyses (S)-4-amino-5-oxopentanoate + tRNA(Glu) + NADP(+) = L-glutamyl-tRNA(Glu) + NADPH + H(+). Its pathway is porphyrin-containing compound metabolism; protoporphyrin-IX biosynthesis; 5-aminolevulinate from L-glutamyl-tRNA(Glu): step 1/2. Functionally, catalyzes the NADPH-dependent reduction of glutamyl-tRNA(Glu) to glutamate 1-semialdehyde (GSA). The polypeptide is Glutamyl-tRNA reductase 1, chloroplastic (HEMA1) (Hordeum vulgare (Barley)).